A 961-amino-acid polypeptide reads, in one-letter code: Roundabout homolog 4 (961 aa).

The first 37 residues, 1–37, serve as a signal peptide directing secretion; that stretch reads MGQGEELRAAVDSGGMGLLGTKCPLPLLLLFIMGGKA. Ig-like C2-type domains follow at residues 42 to 142 and 148 to 235; these read PQIL…ARLS and EDFR…ARVS. Disulfide bonds link Cys-63–Cys-125 and Cys-169–Cys-218. 2 N-linked (GlcNAc...) asparagine glycosylation sites follow: Asn-211 and Asn-257. Fibronectin type-III domains lie at 259–356 and 358–453; these read TLLN…LPEQ and PSAP…LEQA. 3 N-linked (GlcNAc...) asparagine glycosylation sites follow: Asn-371, Asn-400, and Asn-407. Residues 544–559 are compositionally biased toward low complexity; the sequence is SGSRDLSSSSSLSSRL. Disordered stretches follow at residues 544–563 and 600–634; these read SGSRDLSSSSSLSSRLGVDP and QTSSPPVRPSPQTPAARRLPPKLTGTSSPWASSDS. Over residues 623–634 the composition is skewed to polar residues; the sequence is TGTSSPWASSDS. N-linked (GlcNAc...) asparagine glycosylation is found at Asn-691 and Asn-723. Residues 726–810 are disordered; that stretch reads ELAARPLPPT…SLEEEDQDSV (85 aa). The segment covering 755-769 has biased composition (low complexity); that stretch reads LQAPSSDPLPAAPLS. Residues 770 to 783 are compositionally biased toward polar residues; the sequence is VLNSSRPSSPQASF. 2 N-linked (GlcNAc...) asparagine glycosylation sites follow: Asn-772 and Asn-793. The span at 784-801 shows a compositional bias: low complexity; that stretch reads LSVPSPGSSNLSSSSLSS. Position 823 is a phosphoserine (Ser-823).

This sequence belongs to the immunoglobulin superfamily. ROBO family. Interacts with SLIT2 and ENAH.

In terms of biological role, receptor for Slit proteins, at least for SLIT2, and seems to be involved in angiogenesis and vascular patterning. May mediate the inhibition of primary endothelial cell migration by Slit proteins. Involved in the maintenance of endothelial barrier organization and function. The protein is Roundabout homolog 4 (Robo4) of Rattus norvegicus (Rat).